Here is a 109-residue protein sequence, read N- to C-terminus: Nucleoid-associated protein Plut_1285 (109 aa).

Belongs to the YbaB/EbfC family. Homodimer.

The protein resides in the cytoplasm. The protein localises to the nucleoid. In terms of biological role, binds to DNA and alters its conformation. May be involved in regulation of gene expression, nucleoid organization and DNA protection. This Chlorobium luteolum (strain DSM 273 / BCRC 81028 / 2530) (Pelodictyon luteolum) protein is Nucleoid-associated protein Plut_1285.